The sequence spans 179 residues: Cytochrome b6-f complex iron-sulfur subunit (179 aa).

Residues 21–43 (LLTFGTVTGVALGALYPVVKYFI) traverse the membrane as a helical segment. A Rieske domain is found at 61 to 162 (GNDVSLSKFL…ANTVDDKIIL (102 aa)). [2Fe-2S] cluster is bound by residues Cys-108, His-110, Cys-126, and His-129. Cysteines 113 and 128 form a disulfide.

It belongs to the Rieske iron-sulfur protein family. In terms of assembly, the 4 large subunits of the cytochrome b6-f complex are cytochrome b6, subunit IV (17 kDa polypeptide, PetD), cytochrome f and the Rieske protein, while the 4 small subunits are PetG, PetL, PetM and PetN. The complex functions as a dimer. [2Fe-2S] cluster serves as cofactor.

It localises to the cellular thylakoid membrane. It catalyses the reaction 2 oxidized [plastocyanin] + a plastoquinol + 2 H(+)(in) = 2 reduced [plastocyanin] + a plastoquinone + 4 H(+)(out). In terms of biological role, component of the cytochrome b6-f complex, which mediates electron transfer between photosystem II (PSII) and photosystem I (PSI), cyclic electron flow around PSI, and state transitions. In Desmonostoc sp. (strain PCC 7906) (Nostoc sp. (strain PCC 7906)), this protein is Cytochrome b6-f complex iron-sulfur subunit.